The chain runs to 786 residues: Receptor-like protein 30 (786 aa).

An N-terminal signal peptide occupies residues 1 to 30 (MIPSQSNSFSGSVITLYFFLLGSLVLRTLA). The Extracellular segment spans residues 31–739 (SSRLHYCRHD…SEPEEQVINW (709 aa)). 4 N-linked (GlcNAc...) asparagine glycosylation sites follow: asparagine 67, asparagine 98, asparagine 115, and asparagine 133. 4 LRR repeats span residues 110–133 (LQQL…SLGN), 134–158 (LSRL…VSKL), 159–181 (NQLR…SFTN), and 183–204 (TKLS…SFIL). 3 N-linked (GlcNAc...) asparagine glycosylation sites follow: asparagine 181, asparagine 199, and asparagine 206. LRR repeat units lie at residues 207-231 (LTSL…MSGL), 233-255 (NLKY…LFTI), 257-279 (SLQI…NISS), 280-304 (SSRL…ISEI), 305-328 (HSLI…ISKL), 329-352 (VNLQ…LWGL), 354-375 (TVTL…ALDG), 376-399 (ESMQ…ICKQ), 400-423 (RFLK…LKNS), 425-447 (YWLK…VFVN), 448-472 (ASML…LINC), 474-496 (GMEL…LVSL), 497-524 (PSLR…GFQH), and 526-546 (RLID…YFSN). The N-linked (GlcNAc...) asparagine glycan is linked to asparagine 276. N-linked (GlcNAc...) asparagine glycosylation is present at asparagine 338. 5 N-linked (GlcNAc...) asparagine glycosylation sites follow: asparagine 413, asparagine 422, asparagine 434, asparagine 447, and asparagine 471. N-linked (GlcNAc...) asparagine glycosylation is present at asparagine 558. 4 LRR repeats span residues 596-621 (IPYF…VGLL), 622-645 (KELR…LANL), 646-669 (TNLE…LGSL), and 671-694 (FLST…QFQS). Asparagine 628 and asparagine 644 each carry an N-linked (GlcNAc...) asparagine glycan. Asparagine 676 carries N-linked (GlcNAc...) asparagine glycosylation. Residues 740–760 (IAAAIAYGPGVFCGLVIGHIF) traverse the membrane as a helical segment. Topologically, residues 761–786 (FTAHKHEWFMEKFHRNKRRVVTTSAR) are cytoplasmic.

This sequence belongs to the RLP family.

It is found in the cell membrane. Its function is as follows. Receptor for microbe-associated molecular patterns (MAMPs) that induces a BAK1-dependent basal immune response to necrotrophic fungi (e.g. S.sclerotiorum) in the presence of MAMPs (e.g. flg22 and SCLEROTINIA CULTURE FILTRATE ELICITOR1 (SCFE1) from the necrotrophic fungal pathogen S.sclerotiorum). Functionality seems to depend on the presence of the receptor kinase SOBIR1 as an adapter protein. Required for full non-host resistance to bacterial pathogens (e.g. P.syringae pv phaseolicola). This chain is Receptor-like protein 30, found in Arabidopsis thaliana (Mouse-ear cress).